A 314-amino-acid polypeptide reads, in one-letter code: L-lactate dehydrogenase (314 aa).

NAD(+)-binding positions include Val-17, Asp-38, Lys-43, Tyr-69, and 83-84 (GA). Substrate is bound by residues Gln-86 and Arg-92. NAD(+) contacts are provided by residues Ser-105, 122–124 (ASN), and Ser-147. Substrate is bound at residue 124-127 (NPVD). 152–155 (DSAR) contacts substrate. Positions 157 and 172 each coordinate beta-D-fructose 1,6-bisphosphate. His-179 (proton acceptor) is an active-site residue. Tyr-223 bears the Phosphotyrosine mark. Residue Thr-232 coordinates substrate.

It belongs to the LDH/MDH superfamily. LDH family. As to quaternary structure, homotetramer.

The protein localises to the cytoplasm. The catalysed reaction is (S)-lactate + NAD(+) = pyruvate + NADH + H(+). Its pathway is fermentation; pyruvate fermentation to lactate; (S)-lactate from pyruvate: step 1/1. Its activity is regulated as follows. Allosterically activated by fructose 1,6-bisphosphate (FBP). Functionally, catalyzes the conversion of lactate to pyruvate. This chain is L-lactate dehydrogenase, found in Corynebacterium glutamicum (strain R).